The sequence spans 212 residues: Small ribosomal subunit protein uS4c (212 aa).

The 64-residue stretch at 89–152 (MRLDNIIFRL…RSRALVDKNL (64 aa)) folds into the S4 RNA-binding domain.

Belongs to the universal ribosomal protein uS4 family. Part of the 30S ribosomal subunit. Contacts protein S5. The interaction surface between S4 and S5 is involved in control of translational fidelity.

The protein resides in the plastid. It localises to the chloroplast. Its function is as follows. One of the primary rRNA binding proteins, it binds directly to 16S rRNA where it nucleates assembly of the body of the 30S subunit. Functionally, with S5 and S12 plays an important role in translational accuracy. This is Small ribosomal subunit protein uS4c (rps4) from Staurastrum punctulatum (Green alga).